The primary structure comprises 165 residues: Regulator of ribonuclease activity A (165 aa).

It belongs to the RraA family. As to quaternary structure, homotrimer. Binds to both RNA-binding sites in the C-terminal region of Rne and to RhlB.

Its subcellular location is the cytoplasm. Functionally, globally modulates RNA abundance by binding to RNase E (Rne) and regulating its endonucleolytic activity. Can modulate Rne action in a substrate-dependent manner by altering the composition of the degradosome. Modulates RNA-binding and helicase activities of the degradosome. The polypeptide is Regulator of ribonuclease activity A (Haemophilus ducreyi (strain 35000HP / ATCC 700724)).